A 1358-amino-acid polypeptide reads, in one-letter code: Tenascin-R (1358 aa).

The signal sequence occupies residues 1 to 31 (MGIDGETVVLKNMLIGVNLILLGSMLKPSEC). Residues 37-58 (TERAQRQTVEEEGGASSYNTSS) form a disordered region. Asn55 is a glycosylation site (N-linked (GlcNAc...) asparagine). Residues 127 to 157 (CASSSQVLQELLSRIEMLEREVSLLRDQCNT) adopt a coiled-coil conformation. Ser176 carries an O-linked (Xyl...) (chondroitin sulfate) serine glycan. Residues Asn180 and Asn198 are each glycosylated (N-linked (GlcNAc...) asparagine). EGF-like domains are found at residues 188 to 199 (CICNEGWFGKNC), 219 to 230 (CICDSEYSGDDC), and 250 to 261 (CVCEEPYTGEDC). O-linked (Xyl...) (chondroitin sulfate) serine glycosylation is present at Ser271. Asn278 is a glycosylation site (N-linked (GlcNAc...) asparagine). The 12-residue stretch at 281–292 (CLCQEGYAGEDC) folds into the EGF-like 4 domain. 2 disulfides stabilise this stretch: Cys297-Cys307 and Cys314-Cys323. A glycan (O-linked (Xyl...) (chondroitin sulfate) serine) is linked at Ser302. In terms of domain architecture, EGF-like 5 spans 312-323 (CICEEGYQGPDC). Fibronectin type-III domains lie at 328–420 (PPED…TPQG), 421–505 (LQFK…TVID), 506–597 (GPTQ…IDAP), 598–687 (KNLR…TELD), 688–777 (SPRD…FRPI), 778–865 (SHLH…TGID), 866–955 (PPKN…AMDS), 956–1042 (PMDL…TLLD), and 1043–1131 (PPDN…GGRV). N-linked (GlcNAc...) asparagine glycans are attached at residues Asn392, Asn470, and Asn581. Ser724 carries the post-translational modification Phosphoserine. Residues Asn791, Asn869, Asn874, Asn1036, Asn1046, and Asn1261 are each glycosylated (N-linked (GlcNAc...) asparagine). Residues 1129 to 1344 (GRVFSHPQDC…FVEMKMRPYI (216 aa)) enclose the Fibrinogen C-terminal domain.

The protein belongs to the tenascin family. As to quaternary structure, interacts with BCAN and ACAN in a calcium-dependent manner. Interacts with SCN2B, PTPRZ1, and CSPG3. Forms oligomers. Isoforms 1 and 2 form respectively trimeric (tribrachion) and dimeric kink-armed rodlike structures, which are linked by disulfide bridges. Interacts with CNTN1, TNC and FN1. Contains N-linked oligosaccharides with a sulfated carbohydrate structures. Contains N-linked oligosaccharides, O-linked sialylated structures and O-linked chondroitin sulfate glycosaminoglycans. As to expression, brain-specific.

It localises to the secreted. It is found in the extracellular space. Its subcellular location is the extracellular matrix. Its function is as follows. Neural extracellular matrix (ECM) protein involved in interactions with different cells and matrix components. Theses interactions can influence cellular behavior by either evoking a stable adhesion and differentiation, or repulsion and inhibition of neurite growth. Binding to cell surface gangliosides inhibits RGD-dependent integrin-mediated cell adhesion and results in an inhibition of PTK2/FAK1 (FAK) phosphorylation and cell detachment. Binding to membrane surface sulfatides results in a oligodendrocyte adhesion and differentiation. Interaction with CNTN1 induces a repulsion of neurons and an inhibition of neurite outgrowth. Interacts with SCN2B may play a crucial role in clustering and regulation of activity of sodium channels at nodes of Ranvier. TNR-linked chondroitin sulfate glycosaminoglycans are involved in the interaction with FN1 and mediates inhibition of cell adhesion and neurite outgrowth. The highly regulated addition of sulfated carbohydrate structure may modulate the adhesive properties of TNR over the course of development and during synapse maintenance. This Mus musculus (Mouse) protein is Tenascin-R (Tnr).